The primary structure comprises 757 residues: Xaa-Pro dipeptidyl-peptidase (757 aa).

Catalysis depends on charge relay system residues S348, D468, and H498.

Belongs to the peptidase S15 family. As to quaternary structure, homodimer.

Its subcellular location is the cytoplasm. It carries out the reaction Hydrolyzes Xaa-Pro-|- bonds to release unblocked, N-terminal dipeptides from substrates including Ala-Pro-|-p-nitroanilide and (sequentially) Tyr-Pro-|-Phe-Pro-|-Gly-Pro-|-Ile.. Functionally, removes N-terminal dipeptides sequentially from polypeptides having unsubstituted N-termini provided that the penultimate residue is proline. The chain is Xaa-Pro dipeptidyl-peptidase from Streptococcus pneumoniae (strain ATCC BAA-255 / R6).